Here is a 235-residue protein sequence, read N- to C-terminus: tRNA (guanine-N(1)-)-methyltransferase (235 aa).

S-adenosyl-L-methionine contacts are provided by residues G112 and 132 to 137 (IGDYVL).

This sequence belongs to the RNA methyltransferase TrmD family. Homodimer.

It is found in the cytoplasm. The enzyme catalyses guanosine(37) in tRNA + S-adenosyl-L-methionine = N(1)-methylguanosine(37) in tRNA + S-adenosyl-L-homocysteine + H(+). Specifically methylates guanosine-37 in various tRNAs. The chain is tRNA (guanine-N(1)-)-methyltransferase from Cytophaga hutchinsonii (strain ATCC 33406 / DSM 1761 / CIP 103989 / NBRC 15051 / NCIMB 9469 / D465).